We begin with the raw amino-acid sequence, 154 residues long: Ribonuclease H (154 aa).

The RNase H type-1 domain occupies 1–141; that stretch reads MKRIEAYTDG…ADELARAGME (141 aa). The Mg(2+) site is built by Asp-9, Glu-47, Asp-69, and Asp-133.

Belongs to the RNase H family. In terms of assembly, monomer. Mg(2+) serves as cofactor.

It is found in the cytoplasm. The enzyme catalyses Endonucleolytic cleavage to 5'-phosphomonoester.. Its function is as follows. Endonuclease that specifically degrades the RNA of RNA-DNA hybrids. The chain is Ribonuclease H from Brucella abortus (strain 2308).